We begin with the raw amino-acid sequence, 104 residues long: N(4)-acetylcytidine amidohydrolase (104 aa).

An ASCH domain is found at 6–102 (ITFYQRFEAD…SEFWVIEIRL (97 aa)). The active-site Proton acceptor is K21. The active-site Nucleophile is the T24. E74 serves as the catalytic Proton donor.

The protein belongs to the N(4)-acetylcytidine amidohydrolase family.

It catalyses the reaction N(4)-acetylcytidine + H2O = cytidine + acetate + H(+). It carries out the reaction N(4)-acetyl-2'-deoxycytidine + H2O = 2'-deoxycytidine + acetate + H(+). The enzyme catalyses N(4)-acetylcytosine + H2O = cytosine + acetate + H(+). Its function is as follows. Catalyzes the hydrolysis of N(4)-acetylcytidine (ac4C). The chain is N(4)-acetylcytidine amidohydrolase from Haemophilus influenzae (strain PittEE).